A 377-amino-acid polypeptide reads, in one-letter code: Prostaglandin reductase-3 (377 aa).

Lys35 bears the N6-acetyllysine mark. NADP(+) is bound by residues Thr185, Ser205, Lys209, Tyr224, Ser247, Ile269, and Tyr275. Ser299 bears the Phosphoserine mark. Residues 303–305 and Asn361 each bind NADP(+); that span reads FFL.

This sequence belongs to the zinc-containing alcohol dehydrogenase family. Quinone oxidoreductase subfamily. Widely expressed.

The protein localises to the peroxisome. The catalysed reaction is 13,14-dihydro-15-oxo-prostaglandin E2 + NADP(+) = 15-oxoprostaglandin E2 + NADPH + H(+). It catalyses the reaction 13,14-dihydro-15-oxo-prostaglandin E1 + NADP(+) = 15-oxoprostaglandin E1 + NADPH + H(+). It carries out the reaction 13,14-dihydro-15-oxo-PGF2alpha + NADP(+) = 15-oxoprostaglandin F2alpha + NADPH + H(+). The enzyme catalyses 13,14-dihydro-15-oxo-prostaglandin F1alpha + NADP(+) = 15-oxoprostaglandin F1alpha + NADPH + H(+). Functions as 15-oxo-prostaglandin 13-reductase and acts on 15-keto-PGE1, 15-keto-PGE2, 15-keto-PGE1-alpha and 15-keto-PGE2-alpha with highest efficiency towards 15-keto-PGE2-alpha. Overexpression represses transcriptional activity of PPARG and inhibits adipocyte differentiation. This is Prostaglandin reductase-3 from Mus musculus (Mouse).